The primary structure comprises 155 residues: Vasotocin-neurophysin VT 2 (155 aa).

The first 20 residues, 1-20 (MSVCAVLLLCVAGLLCLSSA), serve as a signal peptide directing secretion. Cys-21 and Cys-26 are disulfide-bonded. Gly-29 is subject to Glycine amide. 7 disulfide bridges follow: Cys-42–Cys-86, Cys-45–Cys-59, Cys-53–Cys-76, Cys-60–Cys-66, Cys-93–Cys-106, Cys-100–Cys-118, and Cys-107–Cys-112. Acidic residues predominate over residues 119-128 (SEDSESEEPA). The segment at 119–139 (SEDSESEEPADQNTLGASPGE) is disordered.

This sequence belongs to the vasopressin/oxytocin family.

The protein localises to the secreted. Functionally, vasotocin is an antidiuretic hormone. The chain is Vasotocin-neurophysin VT 2 from Catostomus commersonii (White sucker).